The following is a 124-amino-acid chain: Small ribosomal subunit protein uS12 (124 aa).

Asp-89 is modified (3-methylthioaspartic acid).

It belongs to the universal ribosomal protein uS12 family. In terms of assembly, part of the 30S ribosomal subunit. Contacts proteins S8 and S17. May interact with IF1 in the 30S initiation complex.

Functionally, with S4 and S5 plays an important role in translational accuracy. In terms of biological role, interacts with and stabilizes bases of the 16S rRNA that are involved in tRNA selection in the A site and with the mRNA backbone. Located at the interface of the 30S and 50S subunits, it traverses the body of the 30S subunit contacting proteins on the other side and probably holding the rRNA structure together. The combined cluster of proteins S8, S12 and S17 appears to hold together the shoulder and platform of the 30S subunit. This is Small ribosomal subunit protein uS12 from Vibrio atlanticus (strain LGP32) (Vibrio splendidus (strain Mel32)).